Here is a 136-residue protein sequence, read N- to C-terminus: Glutamyl-tRNA(Gln) amidotransferase subunit C, mitochondrial (136 aa).

It belongs to the GatC family. In terms of assembly, subunit of the heterotrimeric GatCAB amidotransferase (AdT) complex, composed of A (QRSL1), B (GATB) and C (GATC) subunits.

It localises to the mitochondrion. The enzyme catalyses L-glutamyl-tRNA(Gln) + L-glutamine + ATP + H2O = L-glutaminyl-tRNA(Gln) + L-glutamate + ADP + phosphate + H(+). Its function is as follows. Allows the formation of correctly charged Gln-tRNA(Gln) through the transamidation of misacylated Glu-tRNA(Gln) in the mitochondria. The reaction takes place in the presence of glutamine and ATP through an activated gamma-phospho-Glu-tRNA(Gln). This Homo sapiens (Human) protein is Glutamyl-tRNA(Gln) amidotransferase subunit C, mitochondrial.